A 54-amino-acid polypeptide reads, in one-letter code: Large ribosomal subunit protein bL33 (54 aa).

The protein belongs to the bacterial ribosomal protein bL33 family.

The chain is Large ribosomal subunit protein bL33 from Xylella fastidiosa (strain M23).